The chain runs to 505 residues: ATP synthase subunit alpha (505 aa).

169 to 176 (GDRQTGKT) is an ATP binding site.

The protein belongs to the ATPase alpha/beta chains family. In terms of assembly, F-type ATPases have 2 components, CF(1) - the catalytic core - and CF(0) - the membrane proton channel. CF(1) has five subunits: alpha(3), beta(3), gamma(1), delta(1), epsilon(1). CF(0) has three main subunits: a(1), b(2) and c(9-12). The alpha and beta chains form an alternating ring which encloses part of the gamma chain. CF(1) is attached to CF(0) by a central stalk formed by the gamma and epsilon chains, while a peripheral stalk is formed by the delta and b chains.

It is found in the cell membrane. The catalysed reaction is ATP + H2O + 4 H(+)(in) = ADP + phosphate + 5 H(+)(out). Functionally, produces ATP from ADP in the presence of a proton gradient across the membrane. The alpha chain is a regulatory subunit. This is ATP synthase subunit alpha from Alkaliphilus oremlandii (strain OhILAs) (Clostridium oremlandii (strain OhILAs)).